The primary structure comprises 66 residues: Small ribosomal subunit protein bS21A (66 aa).

A compositionally biased stretch (basic residues) spans 34–46; sequence KHYEKPSVKKKRK. The segment at 34-66 is disordered; it reads KHYEKPSVKKKRKQMEAERKRRKAQRFRKPDRD.

The protein belongs to the bacterial ribosomal protein bS21 family.

This Geobacter sulfurreducens (strain ATCC 51573 / DSM 12127 / PCA) protein is Small ribosomal subunit protein bS21A.